Here is a 364-residue protein sequence, read N- to C-terminus: Methylthioribose-1-phosphate isomerase (364 aa).

Residues 53–55, Arg-90, and Gln-203 each bind substrate; that span reads RGA. Asp-244 acts as the Proton donor in catalysis. Position 254-255 (254-255) interacts with substrate; sequence NK.

The protein belongs to the eIF-2B alpha/beta/delta subunits family. MtnA subfamily.

The catalysed reaction is 5-(methylsulfanyl)-alpha-D-ribose 1-phosphate = 5-(methylsulfanyl)-D-ribulose 1-phosphate. It participates in amino-acid biosynthesis; L-methionine biosynthesis via salvage pathway; L-methionine from S-methyl-5-thio-alpha-D-ribose 1-phosphate: step 1/6. In terms of biological role, catalyzes the interconversion of methylthioribose-1-phosphate (MTR-1-P) into methylthioribulose-1-phosphate (MTRu-1-P). The protein is Methylthioribose-1-phosphate isomerase of Sinorhizobium medicae (strain WSM419) (Ensifer medicae).